The primary structure comprises 330 residues: Ketol-acid reductoisomerase (NADP(+)) (330 aa).

In terms of domain architecture, KARI N-terminal Rossmann spans 2 to 182 (VEIYYDDDAS…GGTRAGALRT (181 aa)). NADP(+) is bound by residues 25–28 (YGSQ), Ser-51, and Ser-53. Residue His-108 is part of the active site. Gly-134 serves as a coordination point for NADP(+). The region spanning 183-328 (TFTEETETDL…AKLRPLMSWI (146 aa)) is the KARI C-terminal knotted domain. Positions 191, 195, 227, and 231 each coordinate Mg(2+). Ser-252 is a binding site for substrate.

Belongs to the ketol-acid reductoisomerase family. The cofactor is Mg(2+).

The enzyme catalyses (2R)-2,3-dihydroxy-3-methylbutanoate + NADP(+) = (2S)-2-acetolactate + NADPH + H(+). It carries out the reaction (2R,3R)-2,3-dihydroxy-3-methylpentanoate + NADP(+) = (S)-2-ethyl-2-hydroxy-3-oxobutanoate + NADPH + H(+). Its pathway is amino-acid biosynthesis; L-isoleucine biosynthesis; L-isoleucine from 2-oxobutanoate: step 2/4. The protein operates within amino-acid biosynthesis; L-valine biosynthesis; L-valine from pyruvate: step 2/4. Its function is as follows. Involved in the biosynthesis of branched-chain amino acids (BCAA). Catalyzes an alkyl-migration followed by a ketol-acid reduction of (S)-2-acetolactate (S2AL) to yield (R)-2,3-dihydroxy-isovalerate. In the isomerase reaction, S2AL is rearranged via a Mg-dependent methyl migration to produce 3-hydroxy-3-methyl-2-ketobutyrate (HMKB). In the reductase reaction, this 2-ketoacid undergoes a metal-dependent reduction by NADPH to yield (R)-2,3-dihydroxy-isovalerate. In Frankia alni (strain DSM 45986 / CECT 9034 / ACN14a), this protein is Ketol-acid reductoisomerase (NADP(+)).